A 286-amino-acid polypeptide reads, in one-letter code: MRLLPRLLLLLLLVFPATVLFRGGPRGLLAVAQDLTEDEETVEDSIIEDEDDEAEVEEDEPTDLVEDKEEEDVSGEPEASPSADTTILFVKGEDFPANNIVKFLVGFTNKGTEDFIVESLDASFRYPQDYQFYIQNFTALPLNTVVPPQRQATFEYSFIPAEPMGGRPFGLVINLNYKDLNGNVFQDAVFNQTVTVIEREDGLDGETIFMYMFLAGLGLLVIVGLHQLLESRKRKRPIQKVEMGTSSQNDVDMSWIPQETLNQINKASPRRLPRKRAQKRSVGSDE.

Positions 1–18 (MRLLPRLLLLLLLVFPAT) are cleaved as a signal peptide. Residues 19-207 (VLFRGGPRGL…EREDGLDGET (189 aa)) lie on the Lumenal side of the membrane. A compositionally biased stretch (acidic residues) spans 39–75 (EETVEDSIIEDEDDEAEVEEDEPTDLVEDKEEEDVSG). The segment at 39-83 (EETVEDSIIEDEDDEAEVEEDEPTDLVEDKEEEDVSGEPEASPSA) is disordered. Residues asparagine 136 and asparagine 191 are each glycosylated (N-linked (GlcNAc...) asparagine). A helical membrane pass occupies residues 208 to 228 (IFMYMFLAGLGLLVIVGLHQL). Residues 229–286 (LESRKRKRPIQKVEMGTSSQNDVDMSWIPQETLNQINKASPRRLPRKRAQKRSVGSDE) are Cytoplasmic-facing. The residue at position 247 (serine 247) is a Phosphoserine. Residue threonine 260 is modified to Phosphothreonine. Residues 261 to 286 (LNQINKASPRRLPRKRAQKRSVGSDE) are disordered. The residue at position 268 (serine 268) is a Phosphoserine. Residues 268–279 (SPRRLPRKRAQK) show a composition bias toward basic residues.

This sequence belongs to the TRAP-alpha family. As to quaternary structure, heterotetramer of TRAP-alpha, TRAP-beta, TRAP-delta and TRAP-gamma. Interacts with palmitoylated calnexin (CALX), the interaction is required for efficient folding of glycosylated proteins.

The protein localises to the endoplasmic reticulum membrane. In terms of biological role, TRAP proteins are part of a complex whose function is to bind calcium to the ER membrane and thereby regulate the retention of ER resident proteins. May be involved in the recycling of the translocation apparatus after completion of the translocation process or may function as a membrane-bound chaperone facilitating folding of translocated proteins. This chain is Translocon-associated protein subunit alpha (SSR1), found in Homo sapiens (Human).